The chain runs to 407 residues: MKFLFSVILVIISFLGISKIVNGQIACPSPFLYRATNDTVGDYDLGYQYINIGKPLPPQLSFLNNCLMPCQSSFFEQDSWNSFNKLVKQMGAVAFTCSAIIMIIYGPLMNRSFFKFDRHTITVFCFALSTFFIGVSDLMFATNDVDMVCPESHRYARQTDKTCATNGVLFQFGWLGSVMWFAFLSIDGFFRASGKKMNKIAFAIVLASIWILNIVLSFAPMGGDQYGAYFVGQVNCWILVKNWQYAFFWAELIVSLAIGFVGICLTIYSLIRKTSDGNTLKHVTPLILVFLLFCQYLYMIIFYGIINEKKDHYQNILAEQVGCIFNNALAKMKVPGIVYAGECTFNETITFSSQYAFLFFVRLLGIEIFAFYLFSKETLLLIKSSYIATMFGLGDKDAYDVELEETD.

A signal peptide spans 1-23; the sequence is MKFLFSVILVIISFLGISKIVNG. The Extracellular portion of the chain corresponds to 24–89; it reads QIACPSPFLY…WNSFNKLVKQ (66 aa). Residue Asn37 is glycosylated (N-linked (GlcNAc...) asparagine). A helical membrane pass occupies residues 90–110; it reads MGAVAFTCSAIIMIIYGPLMN. Over 111-120 the chain is Cytoplasmic; it reads RSFFKFDRHT. Residues 121–141 form a helical membrane-spanning segment; that stretch reads ITVFCFALSTFFIGVSDLMFA. At 142-169 the chain is on the extracellular side; the sequence is TNDVDMVCPESHRYARQTDKTCATNGVL. A helical membrane pass occupies residues 170–190; that stretch reads FQFGWLGSVMWFAFLSIDGFF. Over 191 to 199 the chain is Cytoplasmic; the sequence is RASGKKMNK. Residues 200–220 traverse the membrane as a helical segment; that stretch reads IAFAIVLASIWILNIVLSFAP. The Extracellular segment spans residues 221–246; sequence MGGDQYGAYFVGQVNCWILVKNWQYA. The chain crosses the membrane as a helical span at residues 247-267; the sequence is FFWAELIVSLAIGFVGICLTI. Over 268-285 the chain is Cytoplasmic; the sequence is YSLIRKTSDGNTLKHVTP. A helical transmembrane segment spans residues 286-306; sequence LILVFLLFCQYLYMIIFYGII. Topologically, residues 307–354 are extracellular; the sequence is NEKKDHYQNILAEQVGCIFNNALAKMKVPGIVYAGECTFNETITFSSQ. Asn346 is a glycosylation site (N-linked (GlcNAc...) asparagine). Residues 355–375 form a helical membrane-spanning segment; the sequence is YAFLFFVRLLGIEIFAFYLFS. Residues 376–407 are Cytoplasmic-facing; the sequence is KETLLLIKSSYIATMFGLGDKDAYDVELEETD.

The protein belongs to the G-protein coupled receptor Fz/Smo family.

The protein resides in the membrane. In Dictyostelium discoideum (Social amoeba), this protein is Frizzled/smoothened-like sans CRD protein J (fscJ).